The primary structure comprises 77 residues: Cell division topological specificity factor (77 aa).

It belongs to the MinE family.

Its function is as follows. Prevents the cell division inhibition by proteins MinC and MinD at internal division sites while permitting inhibition at polar sites. This ensures cell division at the proper site by restricting the formation of a division septum at the midpoint of the long axis of the cell. In Helicobacter pylori (strain HPAG1), this protein is Cell division topological specificity factor.